The following is a 557-amino-acid chain: DNA 3'-5' helicase XPB (557 aa).

A required for protein stability or solubility region spans residues Met-1–Pro-135. The Helicase ATP-binding domain occupies Val-190 to Arg-344. Leu-203–Thr-210 serves as a coordination point for ATP. A DEAH box motif is present at residues Asp-298–His-301. Positions Arg-398 to Ile-544 constitute a Helicase C-terminal domain.

Belongs to the helicase family. RAD25/XPB subfamily. Monomer. Requires Mn(2+) as cofactor. Mg(2+) is required as a cofactor. It depends on Ca(2+) as a cofactor.

It catalyses the reaction Couples ATP hydrolysis with the unwinding of duplex DNA by translocating in the 3'-5' direction.. The catalysed reaction is ATP + H2O = ADP + phosphate + H(+). In terms of biological role, ATP-dependent 3'-5' DNA helicase, unwinds 3'-overhangs, 3'- flaps, and splayed-arm DNA substrates but not 5'-overhangs or 5'-flap substrates. Requires ATP hydrolysis for activity; the ATPase activity is DNA-dependent and requires a minimum of 4 single-stranded nucleotides (nt) with 6-10 nt providing all necessary interactions for full processive unwinding. The ATPase prefers ATP over CTP or GTP, is almost inactive with TTP. The protein is DNA 3'-5' helicase XPB of Kineococcus radiotolerans (strain ATCC BAA-149 / DSM 14245 / SRS30216).